A 213-amino-acid chain; its full sequence is Small ribosomal subunit protein uS3c (213 aa).

The region spanning 39–109 (IRKYLNAKLA…KFRITITYLQ (71 aa)) is the KH type-2 domain.

This sequence belongs to the universal ribosomal protein uS3 family. In terms of assembly, part of the 30S ribosomal subunit.

Its subcellular location is the plastid. The protein localises to the chloroplast. This Mesostigma viride (Green alga) protein is Small ribosomal subunit protein uS3c (rps3).